The sequence spans 314 residues: 4-hydroxyproline 2-epimerase (314 aa).

C88 functions as the Proton acceptor in the catalytic mechanism. Substrate is bound by residues 89 to 90 (GH), H208, and D232. C236 functions as the Proton donor in the catalytic mechanism. 237–238 (GT) contacts substrate.

Belongs to the proline racemase family. Homodimer.

The enzyme catalyses trans-4-hydroxy-L-proline = cis-4-hydroxy-D-proline. Inhibited by iodoacetate, iodoacetamide and by high amounts (10 mM) of pyrrole-2-carboxylate (PYC). Not inhibited by PYC at 1 mM. Its function is as follows. Allows intracellular utilization of 4-hydroxyproline, one of the major constituents of host collagen, by converting trans-4-hydroxy-L-proline (t4LHyp) to cis-4-hydroxy-D-proline (c4DHyp), which can be further metabolized by intracellular 4-hydroxy-D-proline oxidases. Strong B-cell mitogen. Plays an important role in the regulation of intra- and extracellular amino acid pools, allowing the bacterium to profit from host precursors and enzymatic pathways. Cannot use L-proline, trans-3-hydroxy-L-proline (t3LHyp) and pyrrolidone-5-carboxylate (P5C) as substrate. This is 4-hydroxyproline 2-epimerase from Pseudomonas aeruginosa (strain ATCC 15692 / DSM 22644 / CIP 104116 / JCM 14847 / LMG 12228 / 1C / PRS 101 / PAO1).